The chain runs to 359 residues: Methylthioribose-1-phosphate isomerase (359 aa).

Substrate-binding positions include 50 to 52 (RGA), Arg93, and Gln200. The active-site Proton donor is the Asp241. Substrate is bound at residue 251–252 (NK).

The protein belongs to the eIF-2B alpha/beta/delta subunits family. MtnA subfamily.

It carries out the reaction 5-(methylsulfanyl)-alpha-D-ribose 1-phosphate = 5-(methylsulfanyl)-D-ribulose 1-phosphate. It functions in the pathway amino-acid biosynthesis; L-methionine biosynthesis via salvage pathway; L-methionine from S-methyl-5-thio-alpha-D-ribose 1-phosphate: step 1/6. Catalyzes the interconversion of methylthioribose-1-phosphate (MTR-1-P) into methylthioribulose-1-phosphate (MTRu-1-P). The chain is Methylthioribose-1-phosphate isomerase from Symbiobacterium thermophilum (strain DSM 24528 / JCM 14929 / IAM 14863 / T).